A 396-amino-acid polypeptide reads, in one-letter code: L-cysteine desulfidase (396 aa).

Cysteine 23 acts as the Proton acceptor in catalysis. Positions 287, 329, and 336 each coordinate [4Fe-4S] cluster.

This sequence belongs to the L-cysteine desulfidase family. Homotrimer. [4Fe-4S] cluster is required as a cofactor.

It catalyses the reaction L-cysteine + H2O = hydrogen sulfide + pyruvate + NH4(+) + H(+). Functionally, catalyzes the cleavage of L-cysteine to form 2-aminoprop-2-enoate and sulfide. The former then spontaneously hydrolyzes to pyruvate and NH(3). May be responsible for the production of sulfide required for the biosynthesis of iron-sulfur centers in this archaea. The sequence is that of L-cysteine desulfidase from Methanococcus maripaludis (strain DSM 14266 / JCM 13030 / NBRC 101832 / S2 / LL).